A 690-amino-acid chain; its full sequence is Elongation factor G (690 aa).

The 276-residue stretch at 8 to 283 (SKCRNIGIMA…AVVDFLPAPN (276 aa)) folds into the tr-type G domain. Residues 17 to 24 (AHIDAGKT), 81 to 85 (DTPGH), and 135 to 138 (NKMD) contribute to the GTP site.

It belongs to the TRAFAC class translation factor GTPase superfamily. Classic translation factor GTPase family. EF-G/EF-2 subfamily.

Its subcellular location is the cytoplasm. Functionally, catalyzes the GTP-dependent ribosomal translocation step during translation elongation. During this step, the ribosome changes from the pre-translocational (PRE) to the post-translocational (POST) state as the newly formed A-site-bound peptidyl-tRNA and P-site-bound deacylated tRNA move to the P and E sites, respectively. Catalyzes the coordinated movement of the two tRNA molecules, the mRNA and conformational changes in the ribosome. The chain is Elongation factor G from Ehrlichia chaffeensis (strain ATCC CRL-10679 / Arkansas).